The following is a 426-amino-acid chain: UPF0597 protein CLB_1750 (426 aa).

This sequence belongs to the UPF0597 family.

This chain is UPF0597 protein CLB_1750, found in Clostridium botulinum (strain ATCC 19397 / Type A).